We begin with the raw amino-acid sequence, 335 residues long: Glycerol-3-phosphate dehydrogenase [NAD(P)+] (335 aa).

3 residues coordinate NADPH: S12, W13, and K107. Sn-glycerol 3-phosphate is bound by residues K107, G138, and S140. Residue A142 coordinates NADPH. Sn-glycerol 3-phosphate-binding residues include K193, D246, S256, R257, and N258. The active-site Proton acceptor is K193. NADPH is bound at residue R257. Residues V281 and E283 each coordinate NADPH.

This sequence belongs to the NAD-dependent glycerol-3-phosphate dehydrogenase family.

Its subcellular location is the cytoplasm. It carries out the reaction sn-glycerol 3-phosphate + NAD(+) = dihydroxyacetone phosphate + NADH + H(+). The catalysed reaction is sn-glycerol 3-phosphate + NADP(+) = dihydroxyacetone phosphate + NADPH + H(+). It participates in membrane lipid metabolism; glycerophospholipid metabolism. Functionally, catalyzes the reduction of the glycolytic intermediate dihydroxyacetone phosphate (DHAP) to sn-glycerol 3-phosphate (G3P), the key precursor for phospholipid synthesis. The chain is Glycerol-3-phosphate dehydrogenase [NAD(P)+] from Citrifermentans bemidjiense (strain ATCC BAA-1014 / DSM 16622 / JCM 12645 / Bem) (Geobacter bemidjiensis).